The following is a 295-amino-acid chain: 4-hydroxy-tetrahydrodipicolinate synthase 1 (295 aa).

Pyruvate is bound at residue threonine 46. Catalysis depends on tyrosine 134, which acts as the Proton donor/acceptor. Lysine 162 acts as the Schiff-base intermediate with substrate in catalysis. Pyruvate is bound at residue valine 204.

It belongs to the DapA family. In terms of assembly, homotetramer; dimer of dimers.

The protein resides in the cytoplasm. It catalyses the reaction L-aspartate 4-semialdehyde + pyruvate = (2S,4S)-4-hydroxy-2,3,4,5-tetrahydrodipicolinate + H2O + H(+). It participates in amino-acid biosynthesis; L-lysine biosynthesis via DAP pathway; (S)-tetrahydrodipicolinate from L-aspartate: step 3/4. Catalyzes the condensation of (S)-aspartate-beta-semialdehyde [(S)-ASA] and pyruvate to 4-hydroxy-tetrahydrodipicolinate (HTPA). The chain is 4-hydroxy-tetrahydrodipicolinate synthase 1 from Halalkalibacterium halodurans (strain ATCC BAA-125 / DSM 18197 / FERM 7344 / JCM 9153 / C-125) (Bacillus halodurans).